The chain runs to 73 residues: Translation initiation factor IF-1 (73 aa).

Residues 1–72 (MPKKDAIEVE…TRGRVTYRFK (72 aa)) form the S1-like domain.

Belongs to the IF-1 family. Component of the 30S ribosomal translation pre-initiation complex which assembles on the 30S ribosome in the order IF-2 and IF-3, IF-1 and N-formylmethionyl-tRNA(fMet); mRNA recruitment can occur at any time during PIC assembly.

The protein localises to the cytoplasm. Its function is as follows. One of the essential components for the initiation of protein synthesis. Stabilizes the binding of IF-2 and IF-3 on the 30S subunit to which N-formylmethionyl-tRNA(fMet) subsequently binds. Helps modulate mRNA selection, yielding the 30S pre-initiation complex (PIC). Upon addition of the 50S ribosomal subunit IF-1, IF-2 and IF-3 are released leaving the mature 70S translation initiation complex. This is Translation initiation factor IF-1 from Dehalococcoides mccartyi (strain ATCC BAA-2266 / KCTC 15142 / 195) (Dehalococcoides ethenogenes (strain 195)).